The chain runs to 525 residues: Biotinidase (525 aa).

The first 26 residues, Met1–Ala26, serve as a signal peptide directing secretion. The region spanning Asp54–Thr333 is the CN hydrolase domain. Residue Glu94 is the Proton acceptor of the active site. N-linked (GlcNAc...) asparagine glycans are attached at residues Asn132 and Asn185. The active-site Proton donor is Lys194. Catalysis depends on Cys227, which acts as the Nucleophile. An N-linked (GlcNAc...) asparagine glycan is attached at Asn384.

The protein belongs to the carbon-nitrogen hydrolase superfamily. BTD/VNN family.

The protein resides in the secreted. Its subcellular location is the extracellular space. The catalysed reaction is biocytin + H2O = biotin + L-lysine. It carries out the reaction biotin amide + H2O = biotin + NH4(+). Its function is as follows. Catalytic release of biotin from biocytin, the product of biotin-dependent carboxylases degradation. The polypeptide is Biotinidase (BTD) (Bos taurus (Bovine)).